A 37-amino-acid chain; its full sequence is Large ribosomal subunit protein bL36B (37 aa).

The protein belongs to the bacterial ribosomal protein bL36 family.

This is Large ribosomal subunit protein bL36B from Kineococcus radiotolerans (strain ATCC BAA-149 / DSM 14245 / SRS30216).